Reading from the N-terminus, the 218-residue chain is Type II restriction enzyme KpnI (218 aa).

The enzyme catalyses Endonucleolytic cleavage of DNA to give specific double-stranded fragments with terminal 5'-phosphates.. A P subtype restriction enzyme that recognizes the double-stranded sequence 5'-GGTACC-3' and cleaves after C-5. The polypeptide is Type II restriction enzyme KpnI (Klebsiella pneumoniae).